The primary structure comprises 414 residues: Succinylornithine transaminase (414 aa).

At lysine 260 the chain carries N6-(pyridoxal phosphate)lysine.

The protein belongs to the class-III pyridoxal-phosphate-dependent aminotransferase family. AstC subfamily. The cofactor is pyridoxal 5'-phosphate.

The enzyme catalyses N(2)-succinyl-L-ornithine + 2-oxoglutarate = N-succinyl-L-glutamate 5-semialdehyde + L-glutamate. It functions in the pathway amino-acid degradation; L-arginine degradation via AST pathway; L-glutamate and succinate from L-arginine: step 3/5. In terms of biological role, catalyzes the transamination of N(2)-succinylornithine and alpha-ketoglutarate into N(2)-succinylglutamate semialdehyde and glutamate. Can also act as an acetylornithine aminotransferase. The chain is Succinylornithine transaminase from Yersinia pseudotuberculosis serotype I (strain IP32953).